A 163-amino-acid chain; its full sequence is NADH-quinone oxidoreductase subunit J (163 aa).

5 helical membrane passes run 1-21 (MEFVFYACSLIAVISTLLVII), 30-50 (LYLIISLLSISGIFFIFGAFF), 54-74 (LEVVIYAGAIIVLFVFVIMML), 94-114 (IGPSFLSLILFLLMTYAIFFV), and 138-158 (LLLVELSSLLLLSALVVVFHI).

Belongs to the complex I subunit 6 family. As to quaternary structure, composed of 13 different subunits. Subunits NuoA, H, J, K, L, M, N constitute the membrane sector of the complex.

It is found in the cell membrane. The enzyme catalyses a quinone + NADH + 5 H(+)(in) = a quinol + NAD(+) + 4 H(+)(out). Its function is as follows. NDH-1 shuttles electrons from NADH, via FMN and iron-sulfur (Fe-S) centers, to quinones in the respiratory chain. Couples the redox reaction to proton translocation (for every two electrons transferred, four hydrogen ions are translocated across the cytoplasmic membrane), and thus conserves the redox energy in a proton gradient. The protein is NADH-quinone oxidoreductase subunit J (nuoJ) of Buchnera aphidicola subsp. Schizaphis graminum (strain Sg).